The following is a 242-amino-acid chain: NAD-dependent protein deacylase 1 (242 aa).

Residues 1–242 (MDFKILKEKL…FAMKFEEKEG (242 aa)) enclose the Deacetylase sirtuin-type domain. 21–40 (GAGISKESGIPTFRGEDGLW) contributes to the NAD(+) binding site. Substrate-binding residues include tyrosine 65 and arginine 68. An NAD(+)-binding site is contributed by 99–102 (QNVD). Histidine 117 functions as the Proton acceptor in the catalytic mechanism. Zn(2+) is bound by residues cysteine 125, cysteine 128, cysteine 146, and cysteine 149. Residues 186–188 (GTS) and glutamate 241 each bind NAD(+).

It belongs to the sirtuin family. Class III subfamily. Zn(2+) serves as cofactor.

It localises to the cytoplasm. The enzyme catalyses N(6)-acetyl-L-lysyl-[protein] + NAD(+) + H2O = 2''-O-acetyl-ADP-D-ribose + nicotinamide + L-lysyl-[protein]. It carries out the reaction N(6)-succinyl-L-lysyl-[protein] + NAD(+) + H2O = 2''-O-succinyl-ADP-D-ribose + nicotinamide + L-lysyl-[protein]. Its function is as follows. NAD-dependent lysine deacetylase and desuccinylase that specifically removes acetyl and succinyl groups on target proteins. Modulates the activities of several proteins which are inactive in their acylated form. The polypeptide is NAD-dependent protein deacylase 1 (Caldanaerobacter subterraneus subsp. tengcongensis (strain DSM 15242 / JCM 11007 / NBRC 100824 / MB4) (Thermoanaerobacter tengcongensis)).